The following is a 122-amino-acid chain: Cytochrome b-c1 complex subunit 7-2, mitochondrial (122 aa).

It belongs to the UQCRB/QCR7 family. Component of the ubiquinol-cytochrome c oxidoreductase (cytochrome b-c1 complex, complex III, CIII), a multisubunit enzyme composed of 10 subunits. The complex is composed of 3 respiratory subunits cytochrome b (MT-CYB), cytochrome c1 (CYC1-1 or CYC1-2) and Rieske protein (UCR1-1 or UCR1-2), 2 core protein subunits MPPalpha1 (or MPPalpha2) and MPPB, and 5 low-molecular weight protein subunits QCR7-1 (or QCR7-2), UCRQ-1 (or UCRQ-2), QCR9, UCRY and probably QCR6-1 (or QCR6-2). The complex exists as an obligatory dimer and forms supercomplexes (SCs) in the inner mitochondrial membrane with NADH-ubiquinone oxidoreductase (complex I, CI), resulting in different assemblies (supercomplexes SCI(1)III(2) and SCI(2)III(4)).

The protein resides in the mitochondrion inner membrane. Functionally, component of the ubiquinol-cytochrome c oxidoreductase, a multisubunit transmembrane complex that is part of the mitochondrial electron transport chain which drives oxidative phosphorylation. The respiratory chain contains 3 multisubunit complexes succinate dehydrogenase (complex II, CII), ubiquinol-cytochrome c oxidoreductase (cytochrome b-c1 complex, complex III, CIII) and cytochrome c oxidase (complex IV, CIV), that cooperate to transfer electrons derived from NADH and succinate to molecular oxygen, creating an electrochemical gradient over the inner membrane that drives transmembrane transport and the ATP synthase. The cytochrome b-c1 complex catalyzes electron transfer from ubiquinol to cytochrome c, linking this redox reaction to translocation of protons across the mitochondrial inner membrane, with protons being carried across the membrane as hydrogens on the quinol. In the process called Q cycle, 2 protons are consumed from the matrix, 4 protons are released into the intermembrane space and 2 electrons are passed to cytochrome c. This Arabidopsis thaliana (Mouse-ear cress) protein is Cytochrome b-c1 complex subunit 7-2, mitochondrial (QCR7-2).